The chain runs to 40 residues: Dolichyl-diphosphooligosaccharide--protein glycosyltransferase subunit 4 (40 aa).

At 1–7 (MITDMQL) the chain is on the lumenal side. The chain crosses the membrane as a helical span at residues 8-28 (AIFSNVLGVFLFLLVVAYHYI). Over 29–40 (NANTGKPSAKAK) the chain is Cytoplasmic.

Belongs to the OST4 family. Component of the oligosaccharyltransferase (OST) complex.

Its subcellular location is the endoplasmic reticulum membrane. Subunit of the oligosaccharyl transferase (OST) complex that catalyzes the initial transfer of a defined glycan (Glc(3)Man(9)GlcNAc(2) in eukaryotes) from the lipid carrier dolichol-pyrophosphate to an asparagine residue within an Asn-X-Ser/Thr consensus motif in nascent polypeptide chains, the first step in protein N-glycosylation. N-glycosylation occurs cotranslationally and the complex associates with the Sec61 complex at the channel-forming translocon complex that mediates protein translocation across the endoplasmic reticulum (ER). All subunits are required for a maximal enzyme activity. This is Dolichyl-diphosphooligosaccharide--protein glycosyltransferase subunit 4 from Drosophila sechellia (Fruit fly).